Here is a 146-residue protein sequence, read N- to C-terminus: D-aminoacyl-tRNA deacylase (146 aa).

The Gly-cisPro motif, important for rejection of L-amino acids signature appears at G137–P138.

This sequence belongs to the DTD family. In terms of assembly, homodimer.

The protein resides in the cytoplasm. It catalyses the reaction glycyl-tRNA(Ala) + H2O = tRNA(Ala) + glycine + H(+). The catalysed reaction is a D-aminoacyl-tRNA + H2O = a tRNA + a D-alpha-amino acid + H(+). In terms of biological role, an aminoacyl-tRNA editing enzyme that deacylates mischarged D-aminoacyl-tRNAs. Also deacylates mischarged glycyl-tRNA(Ala), protecting cells against glycine mischarging by AlaRS. Acts via tRNA-based rather than protein-based catalysis; rejects L-amino acids rather than detecting D-amino acids in the active site. By recycling D-aminoacyl-tRNA to D-amino acids and free tRNA molecules, this enzyme counteracts the toxicity associated with the formation of D-aminoacyl-tRNA entities in vivo and helps enforce protein L-homochirality. This is D-aminoacyl-tRNA deacylase from Bacillus thuringiensis subsp. konkukian (strain 97-27).